The following is a 754-amino-acid chain: ATP-dependent RNA helicase DRS1 (754 aa).

2 disordered regions span residues 1–61 (MVVG…NLDE) and 119–227 (GLVK…GDEA). Residues 19 to 34 (DSEDDVPILDSSDDEK) are compositionally biased toward acidic residues. Over residues 40 to 51 (TTKKRKGKNNKK) the composition is skewed to basic residues. A compositionally biased stretch (basic and acidic residues) spans 124–142 (AHIDSKQEEETEKEKVEKE). 2 stretches are compositionally biased toward acidic residues: residues 167 to 193 (NQSEEEEEEEEEEEEEEEEEEEEQEEM) and 202 to 211 (DEIDEEDDSE). Residue S210 is modified to Phosphoserine. A Q motif motif is present at residues 233–261 (ENFNSLSLSRPVLKGLASLGYVKPSPIQS). A Helicase ATP-binding domain is found at 264–439 (IPIALLGKDI…SLSLKKPVRI (176 aa)). 277 to 284 (AVTGSGKT) serves as a coordination point for ATP. The short motif at 387–390 (DEAD) is the DEAD box element. Residues 450–641 (KLTQEFVRIR…SMNDTIEDIL (192 aa)) enclose the Helicase C-terminal domain. The stretch at 623 to 669 (IEETNKLVESMNDTIEDILVEEKEEKEILRAEMQLRKGENMLKHKKE) forms a coiled coil. The disordered stretch occupies residues 675 to 754 (RRTWFQSESD…NKKKGFKSRR (80 aa)). The span at 696-707 (RNKKVTNSKKRK) shows a compositional bias: basic residues. The segment covering 724 to 736 (TKTDRIADQERTF) has biased composition (basic and acidic residues). The span at 737-754 (KKQKSTNSNKKKGFKSRR) shows a compositional bias: basic residues.

This sequence belongs to the DEAD box helicase family. DDX27/DRS1 subfamily. Interacts with RRP1 and associates with pre-ribosomal particles.

The protein resides in the nucleus. It localises to the nucleolus. The catalysed reaction is ATP + H2O = ADP + phosphate + H(+). In terms of biological role, ATP-binding RNA helicase involved in ribosome assembly. The protein is ATP-dependent RNA helicase DRS1 (DRS1) of Saccharomyces cerevisiae (strain YJM789) (Baker's yeast).